The chain runs to 460 residues: Methionine aminopeptidase 2-1 (460 aa).

The tract at residues 1–90 (MGSKSPNGED…SAQAAQQTAP (90 aa)) is disordered. Low complexity predominate over residues 30–39 (SAAASGLLRG). Over residues 42-52 (EDQDEDGDDDE) the composition is skewed to acidic residues. A compositionally biased stretch (basic residues) spans 69 to 81 (TKKRRRNNKKKKS). His212 serves as a coordination point for substrate. Residues Asp233, Asp244, and His313 each contribute to the a divalent metal cation site. Substrate is bound at residue His321. Positions 346 and 441 each coordinate a divalent metal cation.

It belongs to the peptidase M24A family. Methionine aminopeptidase eukaryotic type 2 subfamily. The cofactor is Co(2+). It depends on Zn(2+) as a cofactor. Mn(2+) is required as a cofactor. Requires Fe(2+) as cofactor.

The protein localises to the cytoplasm. The enzyme catalyses Release of N-terminal amino acids, preferentially methionine, from peptides and arylamides.. Cotranslationally removes the N-terminal methionine from nascent proteins. The N-terminal methionine is often cleaved when the second residue in the primary sequence is small and uncharged (Met-Ala-, Cys, Gly, Pro, Ser, Thr, or Val). The polypeptide is Methionine aminopeptidase 2-1 (Leptosphaeria maculans (strain JN3 / isolate v23.1.3 / race Av1-4-5-6-7-8) (Blackleg fungus)).